The sequence spans 62 residues: Large ribosomal subunit protein eL37 (62 aa).

Zn(2+) is bound by residues C20, C23, C35, and C38. The segment at 20 to 38 adopts a C4-type zinc-finger fold; sequence CRRCGRHSFNVAKGYCAAC.

Belongs to the eukaryotic ribosomal protein eL37 family. It depends on Zn(2+) as a cofactor.

Its function is as follows. Binds to the 23S rRNA. The sequence is that of Large ribosomal subunit protein eL37 from Desulfurococcus amylolyticus (strain DSM 18924 / JCM 16383 / VKM B-2413 / 1221n) (Desulfurococcus kamchatkensis).